A 312-amino-acid chain; its full sequence is Malate dehydrogenase (312 aa).

NAD(+) contacts are provided by residues G7–G13 and D34. Substrate-binding residues include R81 and R87. Residues N94 and I117–N119 each bind NAD(+). Positions 119 and 153 each coordinate substrate. The active-site Proton acceptor is H177. Position 227 (M227) interacts with NAD(+).

Belongs to the LDH/MDH superfamily. MDH type 1 family. Homodimer.

The enzyme catalyses (S)-malate + NAD(+) = oxaloacetate + NADH + H(+). In terms of biological role, catalyzes the reversible oxidation of malate to oxaloacetate. The protein is Malate dehydrogenase of Edwardsiella ictaluri (strain 93-146).